We begin with the raw amino-acid sequence, 262 residues long: NAC domain-containing protein 71 (262 aa).

Residues 6 to 160 (LPPGFRFHPT…AFALCRVVKK (155 aa)) form the NAC domain. The DNA-binding element occupies 107-166 (AGYRKTLVFYEGRAPLGDRTNWFMHEYRLCDIDDHSQKSPNFKGAFALCRVVKKNELKKN).

It localises to the nucleus. Transcription factor involved in tissue reunion of wounded inflorescence stems. Required for the division of pith cells in the reunion process, which is dependent on polar-transported auxin and the wound-inducible hormones ethylene and jasmonate. Binds to the promoters of XTH19 and XTH20 to induce their expression via auxin signaling. XTH19 and XTH20 are involved in cell proliferation in the tissue reunion process of incised stems. Involved in hypocotyl graft union formation. Required for the auxin- mediated promotion of vascular tissue proliferation during hypocotyl graft attachment. This chain is NAC domain-containing protein 71, found in Arabidopsis thaliana (Mouse-ear cress).